A 164-amino-acid polypeptide reads, in one-letter code: Deoxyuridine 5'-triphosphate nucleotidohydrolase (164 aa).

Residues 66–68, asparagine 79, 83–85, and lysine 93 each bind substrate; these read RSG and TVD.

The protein belongs to the dUTPase family. Mg(2+) is required as a cofactor.

It carries out the reaction dUTP + H2O = dUMP + diphosphate + H(+). Its pathway is pyrimidine metabolism; dUMP biosynthesis; dUMP from dCTP (dUTP route): step 2/2. This enzyme is involved in nucleotide metabolism: it produces dUMP, the immediate precursor of thymidine nucleotides and it decreases the intracellular concentration of dUTP so that uracil cannot be incorporated into DNA. The polypeptide is Deoxyuridine 5'-triphosphate nucleotidohydrolase (Rhodococcus erythropolis (strain PR4 / NBRC 100887)).